Reading from the N-terminus, the 259-residue chain is Dihydroorotate dehydrogenase B (NAD(+)), electron transfer subunit (259 aa).

In terms of domain architecture, FAD-binding FR-type spans 2-102 (MQKQNMIVVN…LGPLGHGFPL (101 aa)). FAD-binding positions include 53-56 (RPIS), 70-72 (LYR), and 77-78 (GT). Residues cysteine 221, cysteine 226, cysteine 229, and cysteine 246 each contribute to the [2Fe-2S] cluster site.

The protein belongs to the PyrK family. In terms of assembly, heterotetramer of 2 PyrK and 2 PyrD type B subunits. It depends on [2Fe-2S] cluster as a cofactor. FAD serves as cofactor.

Its pathway is pyrimidine metabolism; UMP biosynthesis via de novo pathway; orotate from (S)-dihydroorotate (NAD(+) route): step 1/1. Its function is as follows. Responsible for channeling the electrons from the oxidation of dihydroorotate from the FMN redox center in the PyrD type B subunit to the ultimate electron acceptor NAD(+). The polypeptide is Dihydroorotate dehydrogenase B (NAD(+)), electron transfer subunit (Bacillus cereus (strain B4264)).